The following is a 1390-amino-acid chain: MNAITKSFTGRKRIRKSFGRIPEIAPMPNLIDVQRASYEAFLQMNVSPDSRQDAGLQEVFRSVFPINDFAGRGRLDFMSYEFEDPKYDVEECIQRGLTYAAPLKVILRLTTWDIDEDTGSRSIHDMKEQPVYMGDMPLMTDNGTFIINGTERVIVSQMHRSPGVFFDHDKGKTHSSGKYLFAARVIPYRGSWLDFEFDAKDLIYVRIDRKRKLPVTTLLYALEGANYLAQREQKIAEGGDVEGLDIRGMDQDEILSYFYEAVPFTRLGGEWARPFDPDAFRGLKLLSPLVDADTGEVVAEADAKLTARMVRKIAEKTRVVQVGRLDILGRFLAYDLVNENTGEIYGEAGEELTEDRLAALEEMGITELPLLSVDGSHGPWIRNTLAADKNSCRDEALIDIYRIMRPGEPPTKETAEAMFHGLFFDQGRYDLSAVGRVKMNMRLDVDAPDTLRVLRKEDILRTIKIMCELKDGRGQIDDIDNLGNRRVRSVGELMENQYRVGLLRMERAIRERMGSVDIDTVMPHDLINAKPAAAAVREFFGSSQLSQFMDQTNPLSEVTHKRRLSALGPGGLTRERAGFEVRDVHPTHYGRICPIETAGRPNIGLINSLSTYAKVNKYGFIETPYRLVEEGVLQDGWKYLSAMEEEKLVVAQADAKQDDQGRLTDELVSVRRSGDFRVVPPDQVTACDVSPKQLVSVAAALIPFLENDDANRALMGANMQRQAVPLVKADAPLVGTGMEAAVAHDSGATIVAKRRGVIDQIDGARIVVRATDEAGATQGVDIYRLRKYMRSNQSTCINQRPLVKVGDTVHAGDIIADGPSTELGELALGRNVLVAFMPWNGYNFEDSILISERIARDDVFTSIHIEEFEVMARDTKLGQEEITRDIPNVGEEALRNLDEAGIVYVGAEVNPGDILVGKVTPKGESPMTPEEKLLRAIFGEKASDVRDTSLKLPPGTTGTIVDVRVFSRRGVDKDERAMAIERAEIERLTKDRDDERGIQERSFYNRLRERLIGQTAGAGFKGIRSGTPITEEVLDEHHRATWASITVTSDEVMAELEKLRGEFKEATRRIDARFDSKVEKLQRGDELPPGVMKMVKVFVAVKRKLQPGDKMAGRHGNKGVVSRVVPVEDMPFLENGQAVDIVLNPLGVPSRMNIGQILETHLGWACANIGASIGDMVDEYQRTGERKQELLDRLHEVYGDVIFNEDVATLPNEQLIELANNLRKGLPIATPVFDGASIPDIEEMLEKAGVNKSGQSQLIDGRTGEPFERQTTVGYIYMLKLHHLVDDKIHARSIGPYSLVTQQPLGGKAQFGGQRFGEMEVWALEAYGAAYTLQEMLTVKSDDVSGRTKVYEAIVREQDDFEAGIPESFNVLIKELKSLGLNVELEQSGL.

The protein belongs to the RNA polymerase beta chain family. As to quaternary structure, the RNAP catalytic core consists of 2 alpha, 1 beta, 1 beta' and 1 omega subunit. When a sigma factor is associated with the core the holoenzyme is formed, which can initiate transcription.

The enzyme catalyses RNA(n) + a ribonucleoside 5'-triphosphate = RNA(n+1) + diphosphate. Its function is as follows. DNA-dependent RNA polymerase catalyzes the transcription of DNA into RNA using the four ribonucleoside triphosphates as substrates. In Gluconobacter oxydans (strain 621H) (Gluconobacter suboxydans), this protein is DNA-directed RNA polymerase subunit beta.